Here is a 480-residue protein sequence, read N- to C-terminus: MPAVKIGIIGAGSAVFSLRLVSDLCKTPGLSGSTVTLMDIDEERLDAVLTIAKKYVEEVGADLKFEKTTSVDEAIADADFVINTAMVGGHTYLEKVRRISEKYGYYRGIDAQEFNMVSDYYTFSNYNQLKYFVDIARKIERLSPKAWYSAAANPVFEGTTLVTRTVPIKAVGFCHGHYGVMEIIEKLGLERKQVDWQVAGVNHGIWLNRFRYNGEDAYPLLPRWISEKSKDWKPENPFNDQLSPAAIDMYKFYGVMPIGDTVRNASWRYHRDLETKKRWYGEPWGGADSEIGWKWYQDTLGKVTDITKKVAKFIKENPALKLSDLGSVLGKDLSEKQFVLEVEKILDPEKKSGEQHISFHDALLNDNRSRFVINIPNKGIIQGIDDDVVVEVPAVVDRDGIHPEKIDPPLPERVVKYYLRPRIMRMEMALEAFLTGDIRIIKEVLYRDPRTKSDEQVEKVIEEILSLPENEEMRKNYLKK.

An NAD(+)-binding site is contributed by 4 to 70 (VKIGIIGAGS…ADLKFEKTTS (67 aa)). Substrate contacts are provided by D119 and N153. C174 lines the Mn(2+) pocket. The active-site Proton donor is the H175. H203 contacts Mn(2+). D260 serves as the catalytic Proton acceptor.

The protein belongs to the glycosyl hydrolase 4 family. Homodimer. Requires NAD(+) as cofactor. Mn(2+) serves as cofactor.

The enzyme catalyses Hydrolysis of terminal, non-reducing (1-&gt;4)-linked alpha-D-glucose residues with release of alpha-D-glucose.. Its activity is regulated as follows. Inhibited by EDTA in vitro. Is able to hydrolyze diverse types of alpha-glycoside bonds in di- and trisaccharides: alpha-1,4 bonds of maltose and maltotriose, alpha-1,1 bonds of trehalose, alpha-1,2 bonds of sucrose, alpha-1,3 bonds of turanose and melizitose, alpha-1,6 bonds of isomaltose and melibiose. AglA is not specific with respect to the configuration at the C-4 position of its substrates because it also possesses alpha-galactosidase activity. Acts on the substrate from the non-reducing end of the chain. The activity of AglA drops with increasing length of the saccharide chain. Does not hydrolyze alpha-, beta-, and gamma-cyclodextrins or polysaccharides (starch, pullulan, amylose, amylopectin, glycogen). Does not cleave beta-glycosidic bonds in di-, oligo-, or polysaccharides. This chain is Alpha-glucosidase (aglA), found in Thermotoga neapolitana.